Here is a 357-residue protein sequence, read N- to C-terminus: Holliday junction branch migration complex subunit RuvB (357 aa).

The span at 1-15 shows a compositional bias: low complexity; it reads MAIQSDSLSSLPDSP. Residues 1 to 30 are disordered; sequence MAIQSDSLSSLPDSPRIVAPQPVSPNEESI. The interval 13–195 is large ATPase domain (RuvB-L); the sequence is DSPRIVAPQP…FGIVSRLEFY (183 aa). Residues leucine 34, arginine 35, glycine 76, lysine 79, threonine 80, threonine 81, 142–144, arginine 185, tyrosine 195, and arginine 232 each bind ATP; that span reads EDF. Residue threonine 80 coordinates Mg(2+). Residues 196-266 form a small ATPAse domain (RuvB-S) region; that stretch reads NTDELARIVT…AAGRALAMLD (71 aa). The segment at 269 to 357 is head domain (RuvB-H); that stretch reads PQGLDVMDRK…SGGTGELFSK (89 aa). Residues arginine 305, arginine 324, and arginine 329 each coordinate DNA.

The protein belongs to the RuvB family. Homohexamer. Forms an RuvA(8)-RuvB(12)-Holliday junction (HJ) complex. HJ DNA is sandwiched between 2 RuvA tetramers; dsDNA enters through RuvA and exits via RuvB. An RuvB hexamer assembles on each DNA strand where it exits the tetramer. Each RuvB hexamer is contacted by two RuvA subunits (via domain III) on 2 adjacent RuvB subunits; this complex drives branch migration. In the full resolvosome a probable DNA-RuvA(4)-RuvB(12)-RuvC(2) complex forms which resolves the HJ.

The protein resides in the cytoplasm. The catalysed reaction is ATP + H2O = ADP + phosphate + H(+). The RuvA-RuvB-RuvC complex processes Holliday junction (HJ) DNA during genetic recombination and DNA repair, while the RuvA-RuvB complex plays an important role in the rescue of blocked DNA replication forks via replication fork reversal (RFR). RuvA specifically binds to HJ cruciform DNA, conferring on it an open structure. The RuvB hexamer acts as an ATP-dependent pump, pulling dsDNA into and through the RuvAB complex. RuvB forms 2 homohexamers on either side of HJ DNA bound by 1 or 2 RuvA tetramers; 4 subunits per hexamer contact DNA at a time. Coordinated motions by a converter formed by DNA-disengaged RuvB subunits stimulates ATP hydrolysis and nucleotide exchange. Immobilization of the converter enables RuvB to convert the ATP-contained energy into a lever motion, pulling 2 nucleotides of DNA out of the RuvA tetramer per ATP hydrolyzed, thus driving DNA branch migration. The RuvB motors rotate together with the DNA substrate, which together with the progressing nucleotide cycle form the mechanistic basis for DNA recombination by continuous HJ branch migration. Branch migration allows RuvC to scan DNA until it finds its consensus sequence, where it cleaves and resolves cruciform DNA. In Bordetella pertussis (strain Tohama I / ATCC BAA-589 / NCTC 13251), this protein is Holliday junction branch migration complex subunit RuvB.